The primary structure comprises 85 residues: Conotoxin Lt28.4 (85 aa).

The signal sequence occupies residues 1–21 (MPKLEMMLLVLLILPLCYIDA). Residues 22-40 (VGPPPPWNMEDEIIEHWQK) constitute a propeptide that is removed on maturation.

It belongs to the conotoxin D superfamily. In terms of processing, contains 5 disulfide bonds. Expressed by the venom duct.

Its subcellular location is the secreted. In terms of biological role, probable neurotoxin. The chain is Conotoxin Lt28.4 from Conus litteratus (Lettered cone).